Reading from the N-terminus, the 325-residue chain is Necdin (325 aa).

Disordered regions lie at residues M1–V69 and A77–P96. One can recognise an MAGE domain in the interval L102–A301.

As to quaternary structure, binds to the transactivation domains of E2F1 and p53. Binds also SV40 large T antigen and adenovirus E1A. Interacts with nucleobindin 1 and 2. As to expression, brain specific. Not detected in other tissues. Expressed in postmitotic neurons. In adult brain the highest expression is in hypothalamus. Highly expressed in thalamus and midbrain. Relatively low levels are in cerebral cortex, hippocampus, striatum, olfactory bulb, cerebellum, pons and spinal cord. Also detected in neurally differentiated embryonal carcinoma cells.

The protein resides in the cytoplasm. Its subcellular location is the nucleus. It is found in the nucleoplasm. It localises to the nucleus matrix. Its function is as follows. Growth suppressor that facilitates the entry of the cell into cell cycle arrest. Functionally similar to the retinoblastoma protein it binds to and represses the activity of cell-cycle-promoting proteins such as SV40 large T antigen, adenovirus E1A, and the transcription factor E2F. Necdin also interacts with p53 and works in an additive manner to inhibit cell growth. Also functions as a transcription factor and directly binds to specific guanosine-rich DNA sequences. This Mus musculus (Mouse) protein is Necdin (Ndn).